A 356-amino-acid chain; its full sequence is Glycerol-1-phosphate dehydrogenase [NAD(P)+] (356 aa).

Residues 103–107 and 125–128 each bind NAD(+); these read GRSID and TAAS. Residue aspartate 130 participates in substrate binding. Serine 134 provides a ligand contact to NAD(+). Aspartate 177 provides a ligand contact to substrate. Positions 177 and 257 each coordinate Zn(2+). Residue histidine 261 coordinates substrate. Position 273 (histidine 273) interacts with Zn(2+).

Belongs to the glycerol-1-phosphate dehydrogenase family. It depends on Zn(2+) as a cofactor.

The protein localises to the cytoplasm. The catalysed reaction is sn-glycerol 1-phosphate + NAD(+) = dihydroxyacetone phosphate + NADH + H(+). It catalyses the reaction sn-glycerol 1-phosphate + NADP(+) = dihydroxyacetone phosphate + NADPH + H(+). Its pathway is membrane lipid metabolism; glycerophospholipid metabolism. Its function is as follows. Catalyzes the NAD(P)H-dependent reduction of dihydroxyacetonephosphate (DHAP or glycerone phosphate) to glycerol 1-phosphate (G1P). The G1P thus generated is used as the glycerophosphate backbone of phospholipids in the cellular membranes of Archaea. This Methanosarcina barkeri (strain Fusaro / DSM 804) protein is Glycerol-1-phosphate dehydrogenase [NAD(P)+].